Here is a 420-residue protein sequence, read N- to C-terminus: L-rhamnose isomerase (420 aa).

Residues His264, Asp296, and Asp298 each coordinate Mn(2+).

It belongs to the rhamnose isomerase family. Mn(2+) serves as cofactor.

It is found in the cytoplasm. It carries out the reaction L-rhamnopyranose = L-rhamnulose. The protein operates within carbohydrate degradation; L-rhamnose degradation; glycerone phosphate from L-rhamnose: step 1/3. In terms of biological role, catalyzes the interconversion of L-rhamnose and L-rhamnulose. The polypeptide is L-rhamnose isomerase (Listeria monocytogenes serovar 1/2a (strain ATCC BAA-679 / EGD-e)).